Here is a 530-residue protein sequence, read N- to C-terminus: AA9 family lytic polysaccharide monooxygenase C (530 aa).

A signal peptide spans 1 to 18 (MQLKSTVHFLSLLAYTAA). Residues H19 and H103 each coordinate Cu(2+). Intrachain disulfides connect C72–C190 and C114–C118. N-linked (GlcNAc...) asparagine glycosylation occurs at N150. Q185 lines the O2 pocket. Cu(2+) is bound at residue Y187. The span at 238 to 251 (YGSGSSSSQNSVES) shows a compositional bias: low complexity. Disordered stretches follow at residues 238 to 279 (YGSG…STSA), 297 to 329 (ESSS…SSSA), 348 to 375 (YSSA…KLSS), and 492 to 512 (GNGA…GTTP). Basic and acidic residues predominate over residues 312 to 324 (KSVEAKETTKVEE). Over residues 348 to 368 (YSSASPSSSPVLSSSKPASTS) the composition is skewed to low complexity.

The protein belongs to the polysaccharide monooxygenase AA9 family. It depends on Cu(2+) as a cofactor.

The protein localises to the secreted. It carries out the reaction [(1-&gt;4)-beta-D-glucosyl]n+m + reduced acceptor + O2 = 4-dehydro-beta-D-glucosyl-[(1-&gt;4)-beta-D-glucosyl]n-1 + [(1-&gt;4)-beta-D-glucosyl]m + acceptor + H2O.. In terms of biological role, lytic polysaccharide monooxygenase (LPMO) that depolymerizes polysaccharides via the oxidation of scissile alpha- or beta-(1-4)-glycosidic bonds, yielding C1 or C4 oxidation products. Catalysis by LPMOs requires the reduction of the active-site copper from Cu(II) to Cu(I) by a reducing agent and H(2)O(2) or O(2) as a cosubstrate. Amorphous cellulose is not a suitable substrate for LPMO9C, which may act at the surface of cellulose microfibrils without any release of soluble products. The protein is AA9 family lytic polysaccharide monooxygenase C of Geotrichum candidum (Oospora lactis).